The primary structure comprises 235 residues: Orotidine 5'-phosphate decarboxylase (235 aa).

Residues Asp-12, Lys-34, 61–70, Thr-116, Arg-177, Gln-186, and Arg-207 contribute to the substrate site; that span reads DMKLLDIDNT. Lys-63 serves as the catalytic Proton donor.

This sequence belongs to the OMP decarboxylase family. Type 1 subfamily. As to quaternary structure, homodimer.

It carries out the reaction orotidine 5'-phosphate + H(+) = UMP + CO2. It functions in the pathway pyrimidine metabolism; UMP biosynthesis via de novo pathway; UMP from orotate: step 2/2. In terms of biological role, catalyzes the decarboxylation of orotidine 5'-monophosphate (OMP) to uridine 5'-monophosphate (UMP). The polypeptide is Orotidine 5'-phosphate decarboxylase (Rhizobium leguminosarum bv. trifolii (strain WSM2304)).